We begin with the raw amino-acid sequence, 570 residues long: Grayanic acid biosynthesis cluster cytochrome P450 monooxygenase (570 aa).

Residues 9–29 (ILTIFWLPIAAAXLYGAGLAI) form a helical membrane-spanning segment. Asparagine 191 carries N-linked (GlcNAc...) asparagine glycosylation. A heme-binding site is contributed by cysteine 510.

The protein belongs to the cytochrome P450 family. The cofactor is heme.

It is found in the membrane. The protein operates within secondary metabolite biosynthesis. Its function is as follows. Non-reducing polyketide synthase; part of the gene cluster that mediates the biosynthesis of orcinol depsidone grayanic acid (GRA), the only major secondary metabolite known in C.grayi. The first step consists in the ring and depside synthesis by PKS16 leading to 4-O-demethylsphaerophorin, involving different orcinol-like rings, one with acetyl CoA and the other with octanoyl CoA as the starter. Further depsidone formation by the GRA cluster-specific cytochrome P450 leads to 4-O-demethylgrayanic acid. Finally, the cluster specific O-methyltransferase probably converts the 4-O-demethylgrayanic acid into grayanic acid. The sequence is that of Grayanic acid biosynthesis cluster cytochrome P450 monooxygenase from Cladonia grayi (Gray's cup lichen).